We begin with the raw amino-acid sequence, 614 residues long: MCGIIGYIGRREAAPLLLNGLKRLEYRGYDSAGMAVLNGSMKMLKKKGSVSNLEELLNVSGTVMLGATVGIAHTRWATHGDPSDRNAHPHMNVSGDIALIHNGIIENYSALKQELMGEGYVFESDTDSEVLVHLIDRIWKNDSALGLEGAVRQALRHVEGAYGICVVSSREPDKIVVARKGSPLVIGLGDGEFFIASDAAPIVEHTNKVVYLSDGEMAVVTRDSYTVKTIENVEQQKRVTELDFSLEKIEKGGFEHFMLKEIFEQPEVMRDVMRGRVRVEEGRVHLGGIHDYLDRLKQAKRIMICACGTSWHAGLIGEYLIEEFARIPVEVDYASEFRYRNPIVSSDDVVIVISQSGETADTLAALRLAKEKGAMVMGICNVVGSTIPRETLCGMYTHAGPEVGVASTKAFTAQVIVLFMLAMALSKGRTISQEEIKLNLRELAEVPDKVAWILEQNDAIKEIAVKLKDARNALYLGRGYNFPVALEGALKLKEISYIHAEGYPAAEMKHGPIALIDEDMPVIVIATRDNTYAKILSNIEEVRSRKGRVIAIASEGDREIERLTEDVIYIPQASAAVLPLLTVIPLQLLSYHVATLRGCNVDRPRNLAKSVTVE.

The active-site Nucleophile; for GATase activity is the Cys-2. The 222-residue stretch at 2–223 folds into the Glutamine amidotransferase type-2 domain; the sequence is CGIIGYIGRR…DGEMAVVTRD (222 aa). 2 consecutive SIS domains span residues 292-431 and 463-604; these read YLDR…GRTI and IAVK…VDRP. The active-site For Fru-6P isomerization activity is the Lys-609.

In terms of assembly, homodimer.

The protein localises to the cytoplasm. The enzyme catalyses D-fructose 6-phosphate + L-glutamine = D-glucosamine 6-phosphate + L-glutamate. Its function is as follows. Catalyzes the first step in hexosamine metabolism, converting fructose-6P into glucosamine-6P using glutamine as a nitrogen source. The sequence is that of Glutamine--fructose-6-phosphate aminotransferase [isomerizing] from Chlorobaculum tepidum (strain ATCC 49652 / DSM 12025 / NBRC 103806 / TLS) (Chlorobium tepidum).